Reading from the N-terminus, the 471-residue chain is UDP-N-acetylmuramate--L-alanine ligase (471 aa).

ATP is bound at residue 114 to 120 (GTHGKTT).

It belongs to the MurCDEF family.

The protein resides in the cytoplasm. The catalysed reaction is UDP-N-acetyl-alpha-D-muramate + L-alanine + ATP = UDP-N-acetyl-alpha-D-muramoyl-L-alanine + ADP + phosphate + H(+). It participates in cell wall biogenesis; peptidoglycan biosynthesis. Cell wall formation. The polypeptide is UDP-N-acetylmuramate--L-alanine ligase (Sinorhizobium medicae (strain WSM419) (Ensifer medicae)).